The primary structure comprises 521 residues: GRAS family protein RAD1 (521 aa).

A GRAS domain is found at 137 to 520; the sequence is DGSCADGMRL…KPIVAVSCWK (384 aa). The interval 144-212 is leucine repeat I (LRI); it reads MRLVQLLIAC…PIGNNSAGSD (69 aa). Positions 231–301 are VHIID; that stretch reads FKLVYENCPH…HRVRRLRITA (71 aa). Positions 262-266 match the VHIID motif; sequence LHVVD. The segment at 311–343 is leucine repeat II (LRII); the sequence is VIGEELSIYAKNLGIHLEFSIVEKNLENLKPKD. Residues 352-443 form a PFYRE region; it reads LVVNSILQLH…QFYFAEEIKN (92 aa). Residues 446-520 form an SAW region; it reads SCEGPLRMER…KPIVAVSCWK (75 aa).

This sequence belongs to the GRAS family. In terms of assembly, interacts with RAM1. Interacts with NSP2.

The protein resides in the nucleus. Functionally, transcription factor acting as a regulator of arbuscular mycorrhiza (AM)-related genes (e.g. STR). Required for the morphogenesis of arbuscules upon symbiosis with AM fungi (e.g. Glomus versiforme). Also involved in restricting mycorrhizal colonization of the root meristem. The chain is GRAS family protein RAD1 from Medicago truncatula (Barrel medic).